A 213-amino-acid polypeptide reads, in one-letter code: MSILSIVLTGFGLAMDAFAVSVAKGITLTRVKAKDALKVALFFGGFQALMPLIGWGAGRYFADYIKAFDHWIAFILLGFIGGKMIFEALKEDDEEKAEVAVSMEVSKNKEREFANMKRKEELSAKNLTVLAIATSIDALAVGVSFAFLGISIVQTIIIIGIITFVLCFLGVIIGEKLGDIFKNYAEIVGGVILILIGINILLEHTGIIEKLFS.

6 helical membrane passes run I3–A23, A36–G56, A67–E87, L130–I150, I152–I172, and I187–I207.

The protein belongs to the MntP (TC 9.B.29) family.

It is found in the cell membrane. Probably functions as a manganese efflux pump. The chain is Putative manganese efflux pump MntP from Clostridium perfringens (strain ATCC 13124 / DSM 756 / JCM 1290 / NCIMB 6125 / NCTC 8237 / Type A).